The primary structure comprises 313 residues: Protease HtpX homolog (313 aa).

2 helical membrane-spanning segments follow: residues 7–24 and 29–46; these read AMLLAFMTALFMAVGYLI and GMMIALVIAAAMNLFSYW. His130 serves as a coordination point for Zn(2+). Glu131 is an active-site residue. His134 contributes to the Zn(2+) binding site. A run of 2 helical transmembrane segments spans residues 145 to 165 and 172 to 192; these read ITATLAGAISMLGNFAFFFGG and PFGFIGILVAMIVAPLAAMVV. Glu201 is a binding site for Zn(2+). A disordered region spans residues 282-313; that stretch reads GNAPPASLREDEPGADGPWGRSASRARKGPWS.

Belongs to the peptidase M48B family. The cofactor is Zn(2+).

Its subcellular location is the cell inner membrane. The chain is Protease HtpX homolog from Chelativorans sp. (strain BNC1).